A 393-amino-acid polypeptide reads, in one-letter code: Cysteine protease ATG4B (393 aa).

Met1 bears the N-acetylmethionine mark. Ser34 carries the post-translational modification Phosphoserine; by PKB/AKT1 and PKB/AKT2. Catalysis depends on Cys74, which acts as the Nucleophile. Cys189 carries the S-nitrosocysteine modification. Catalysis depends on residues Asp278 and His280. 2 positions are modified to S-nitrosocysteine: Cys292 and Cys301. The cysteines at positions 292 and 361 are disulfide-linked. Phosphoserine; by ULK1 is present on Ser316. Ser383 carries the post-translational modification Phosphoserine; by STK26. Positions 388–391 (FEIL) match the LIR motif. Ser392 is modified (phosphoserine).

The protein belongs to the peptidase C54 family. Interacts with PFKP; promoting phosphorylation of ATG4B at Ser-34. Interacts with GBP7. In terms of processing, phosphorylation at Ser-383 and Ser-392 promotes autophagy by increasing protein delipidation activity without affecting proteolytic activation of ATG8 proteins. Phosphorylation at Ser-316 by ULK1 inhibits autophagy by decreasing both proteolytic activation and delipidation activities. Phosphorylation at Ser-316 is dephosphorylated by protein phosphatase 2A (PP2A). Phosphorylation at Ser-34 by AKT2 promotes its hydrolase activity, leading to increased proteolytic activation and delipidation of ATG8 family proteins. Phosphorylation at Ser-34 by AKT1 promotes mitochondrial localization and inhibition of the F1F0-ATP synthase activity, leading to elevation of mitochondrial reactive oxygen species (ROS). Ubiquitinated by RNF5, leading to its degradation by the proteasome. Post-translationally, S-nitrosylation at Cys-189 and Cys-292 in response to high glucose decreases both proteolytic activation and delipidation activities. In terms of processing, O-glycosylated by OGT, leading to increase protease activity, thereby promoting the proteolytic activation of ATG8 family proteins. Forms reversible intrachain disulfide bonds in response to oxidative stress. Forms interchain disulfide bonds, leading to formation of homooligomers in response to oxidation.

It localises to the cytoplasm. Its subcellular location is the cytosol. It is found in the cytoplasmic vesicle. The protein localises to the autophagosome. The protein resides in the endoplasmic reticulum. It localises to the mitochondrion. It carries out the reaction [protein]-C-terminal L-amino acid-glycyl-phosphatidylethanolamide + H2O = [protein]-C-terminal L-amino acid-glycine + a 1,2-diacyl-sn-glycero-3-phosphoethanolamine. The catalysed reaction is [protein]-C-terminal L-amino acid-glycyl-phosphatidylserine + H2O = [protein]-C-terminal L-amino acid-glycine + a 1,2-diacyl-sn-glycero-3-phospho-L-serine. Inhibited by N-ethylmaleimide. Redox-regulated during autophagy since reducing conditions activate ATG4A whereas an oxidizing environment such as the presence of H(2)O(2) inhibits its activity. The cysteine protease activity compounds is inhibited by styrylquinoline compounds 4-28 and LV-320. Cysteine protease that plays a key role in autophagy by mediating both proteolytic activation and delipidation of ATG8 family proteins. Required for canonical autophagy (macroautophagy), non-canonical autophagy as well as for mitophagy. The protease activity is required for proteolytic activation of ATG8 family proteins: cleaves the C-terminal amino acid of ATG8 proteins MAP1LC3A, MAP1LC3B, MAP1LC3C, GABARAPL1, GABARAPL2 and GABARAP, to reveal a C-terminal glycine. Exposure of the glycine at the C-terminus is essential for ATG8 proteins conjugation to phosphatidylethanolamine (PE) and insertion to membranes, which is necessary for autophagy. Protease activity is also required to counteract formation of high-molecular weight conjugates of ATG8 proteins (ATG8ylation): acts as a deubiquitinating-like enzyme that removes ATG8 conjugated to other proteins, such as ATG3. In addition to the protease activity, also mediates delipidation of ATG8 family proteins. Catalyzes delipidation of PE-conjugated forms of ATG8 proteins during macroautophagy. Also involved in non-canonical autophagy, a parallel pathway involving conjugation of ATG8 proteins to single membranes at endolysosomal compartments, by catalyzing delipidation of ATG8 proteins conjugated to phosphatidylserine (PS). Compared to other members of the family (ATG4A, ATG4C or ATG4C), constitutes the major protein for proteolytic activation of ATG8 proteins, while it displays weaker delipidation activity than other ATG4 paralogs. Involved in phagophore growth during mitophagy independently of its protease activity and of ATG8 proteins: acts by regulating ATG9A trafficking to mitochondria and promoting phagophore-endoplasmic reticulum contacts during the lipid transfer phase of mitophagy. This chain is Cysteine protease ATG4B, found in Homo sapiens (Human).